Reading from the N-terminus, the 410-residue chain is Auxin-induced protein 5NG4 (410 aa).

The Cytoplasmic portion of the chain corresponds to 1 to 16 (MASNIMQRCNVFMSER). A helical membrane pass occupies residues 17–37 (VKLHAAMLALQFGYAGFHIVS). At 38-47 (RAALNMGVSK) the chain is on the extracellular side. Residues 48–68 (VVFPVYRNILALMLIGPCAYF) form a helical membrane-spanning segment. The Cytoplasmic segment spans residues 69-74 (LEKKER). A helical transmembrane segment spans residues 75 to 95 (PALTLSFLIQFFLLALCGITG). Topologically, residues 96 to 109 (QSRILSLRIVLHIP) are extracellular. A helical membrane pass occupies residues 110–130 (TFASAIQNSVPAITFIMAAAL). Residues 131–141 (RLEKVHISRRD) are Cytoplasmic-facing. The helical transmembrane segment at 142-162 (GLAKIIGTVACVSGATIITLY) threads the bilayer. Residues 163–196 (KGPPITHIWRPNLEVTASYFKAFQGNDLSAKSEN) lie on the Extracellular side of the membrane. N-linked (GlcNAc...) asparagine glycosylation occurs at N196. Residues 197-217 (WTLGCIYLLGNCLAWSGWIVL) form a helical membrane-spanning segment. An EamA domain is found at 209–338 (LAWSGWIVLQ…IIIGLYLVLW (130 aa)). Over 218–229 (QAPVLKRYPARL) the chain is Cytoplasmic. The helical transmembrane segment at 230–250 (SVTSFTCFFGVIQFLIIAAFF) threads the bilayer. At 251–264 (ETDLEHWKIHSGGE) the chain is on the extracellular side. A helical membrane pass occupies residues 265–285 (LFTILYAGFVASGIAFSVQIW). Topologically, residues 286 to 292 (CIDRGGP) are cytoplasmic. A helical membrane pass occupies residues 293–313 (VFVAVYQPVQTIAVAIMASII). Residues 314 to 317 (LGEQ) are Extracellular-facing. The chain crosses the membrane as a helical span at residues 318 to 338 (FYLGGIFGAILIIIGLYLVLW). The Cytoplasmic segment spans residues 339 to 410 (GKSEEKRLGL…IPSPSDEPQP (72 aa)).

This sequence belongs to the drug/metabolite transporter (DMT) superfamily. Plant drug/metabolite exporter (P-DME) (TC 2.A.7.4) family.

Its subcellular location is the membrane. The sequence is that of Auxin-induced protein 5NG4 from Pinus taeda (Loblolly pine).